Consider the following 63-residue polypeptide: Cysteine-rich venom protein 3 (63 aa).

The first 25 residues, 1 to 25 (MRKPITLILVVALALVLLATSEVSA), serve as a signal peptide directing secretion. 3 cysteine pairs are disulfide-bonded: C29/C43, C36/C48, and C42/C58.

In terms of tissue distribution, expressed by the venom gland.

The protein resides in the secreted. The protein is Cysteine-rich venom protein 3 of Pimpla hypochondriaca (Parasitoid wasp).